We begin with the raw amino-acid sequence, 230 residues long: Transcription factor bHLH147 (230 aa).

Residues 1-17 show a composition bias toward polar residues; the sequence is MESISPVSNQLLQPTTT. The interval 1–52 is disordered; that stretch reads MESISPVSNQLLQPTTTSSNSDRSRRKRKKKSSPSSVEKSPSPSISLEKWRS. Residues 33-46 are compositionally biased toward low complexity; that stretch reads SPSSVEKSPSPSIS. The region spanning 147–196 is the bHLH domain; that stretch reads KQRATVLRLKAKGLPAVQRKVKVLSRLVPGCRKQSLPVVLEETTDYIAAM. The disordered stretch occupies residues 210–230; that stretch reads VSSSPPPPTPGHEGGQTHMLG.

In terms of assembly, homodimer. Interacts with PRE3.

It is found in the nucleus. In terms of biological role, atypical bHLH transcription factor probably unable to bind DNA. Negatively regulates brassinosteroid signaling. This Arabidopsis thaliana (Mouse-ear cress) protein is Transcription factor bHLH147 (BHLH147).